The primary structure comprises 95 residues: Putative regulatory protein Daud_1598 (95 aa).

It belongs to the RemA family.

This is Putative regulatory protein Daud_1598 from Desulforudis audaxviator (strain MP104C).